A 186-amino-acid chain; its full sequence is Peptidyl-tRNA hydrolase (186 aa).

Tyr14 is a tRNA binding site. Catalysis depends on His19, which acts as the Proton acceptor. TRNA is bound by residues Tyr64, Asn66, and Asn112.

The protein belongs to the PTH family. As to quaternary structure, monomer.

The protein localises to the cytoplasm. The catalysed reaction is an N-acyl-L-alpha-aminoacyl-tRNA + H2O = an N-acyl-L-amino acid + a tRNA + H(+). Hydrolyzes ribosome-free peptidyl-tRNAs (with 1 or more amino acids incorporated), which drop off the ribosome during protein synthesis, or as a result of ribosome stalling. In terms of biological role, catalyzes the release of premature peptidyl moieties from peptidyl-tRNA molecules trapped in stalled 50S ribosomal subunits, and thus maintains levels of free tRNAs and 50S ribosomes. The sequence is that of Peptidyl-tRNA hydrolase from Geobacillus thermodenitrificans (strain NG80-2).